The sequence spans 203 residues: tRNA (guanine-N(7)-)-methyltransferase (203 aa).

Glu-34, Glu-59, Asp-86, and Asp-107 together coordinate S-adenosyl-L-methionine. Asp-107 is an active-site residue. Substrate contacts are provided by residues Lys-111, Asp-143, and 181-184 (TSYE).

It belongs to the class I-like SAM-binding methyltransferase superfamily. TrmB family.

It catalyses the reaction guanosine(46) in tRNA + S-adenosyl-L-methionine = N(7)-methylguanosine(46) in tRNA + S-adenosyl-L-homocysteine. It functions in the pathway tRNA modification; N(7)-methylguanine-tRNA biosynthesis. Its function is as follows. Catalyzes the formation of N(7)-methylguanine at position 46 (m7G46) in tRNA. The chain is tRNA (guanine-N(7)-)-methyltransferase from Mycoplasmopsis pulmonis (strain UAB CTIP) (Mycoplasma pulmonis).